The sequence spans 327 residues: Phenylalanine--tRNA ligase alpha subunit (327 aa).

Glutamate 252 provides a ligand contact to Mg(2+).

The protein belongs to the class-II aminoacyl-tRNA synthetase family. Phe-tRNA synthetase alpha subunit type 1 subfamily. In terms of assembly, tetramer of two alpha and two beta subunits. Mg(2+) is required as a cofactor.

It is found in the cytoplasm. It carries out the reaction tRNA(Phe) + L-phenylalanine + ATP = L-phenylalanyl-tRNA(Phe) + AMP + diphosphate + H(+). In Shewanella amazonensis (strain ATCC BAA-1098 / SB2B), this protein is Phenylalanine--tRNA ligase alpha subunit.